Consider the following 580-residue polypeptide: Negative elongation factor B (580 aa).

An N6-acetyllysine modification is found at lysine 519. A disordered region spans residues 548–580 (LEQLDHRKPSPAQAAETPALELPLPSVPAPAPL). Serine 557 carries the post-translational modification Phosphoserine.

It belongs to the NELF-B family. The NELF complex is composed of NELFA, NELFB, NELFCD (isoform NELF-C or isoform NELF-D) and NELFE; the N-terminus of NELFB binds to the NELFA:NELFCD subcomplex. Binds RNA which may help to stabilize the NELF complex on nucleic acid. Interacts with the first BRCT repeat of BRCA1. Interacts with KIAA1191. Interacts with NELFE. As to expression, widely expressed. Expressed in heart, brain, lung, placenta, liver, skeletal muscle, kidney and pancreas.

The protein resides in the nucleus. Its function is as follows. Essential component of the NELF complex, a complex that negatively regulates the elongation of transcription by RNA polymerase II. The NELF complex, which acts via an association with the DSIF complex and causes transcriptional pausing, is counteracted by the P-TEFb kinase complex. May be able to induce chromatin unfolding. Essential for early embryogenesis; plays an important role in maintaining the undifferentiated state of embryonic stem cells (ESCs) by preventing unscheduled expression of developmental genes. Plays a key role in establishing the responsiveness of stem cells to developmental cues; facilitates plasticity and cell fate commitment in ESCs by establishing the appropriate expression level of signaling molecules. Supports the transcription of genes involved in energy metabolism in cardiomyocytes; facilitates the association of transcription initiation factors with the promoters of the metabolism-related genes. Functionally, (Microbial infection) The NELF complex is involved in HIV-1 latency possibly involving recruitment of PCF11 to paused RNA polymerase II. In vitro, binds weakly to the HIV-1 TAR RNA which is located in the long terminal repeat (LTR) of HIV-1. The chain is Negative elongation factor B (NELFB) from Homo sapiens (Human).